The primary structure comprises 111 residues: Magnetosome protein MamF (111 aa).

The Cytoplasmic portion of the chain corresponds to 1–17 (MAETILIETKTAGGNCR). The helical transmembrane segment at 18–38 (SYLMAGASYLGILCFVPLLMS) threads the bilayer. Over 39–50 (RDDEYVYFHAKQ) the chain is Lumenal. Residues 51–71 (GLVLWMWSILAMFALHLPGIG) traverse the membrane as a helical segment. Position 72 (K72) is a topological domain, cytoplasmic. A helical transmembrane segment spans residues 73–93 (WLFGFSSMGVLMLSVVGLVSV). At 94 to 111 (ALRRTWRLPLISHVVALI) the chain is on the lumenal side.

It belongs to the magnetosome MamF/MmsF protein family. In terms of assembly, may form homooligomers. Subject to cleavage or degradation; identified by N-terminal sequencing of proteins that are about 103, 92 and 15 kDa in size.

It is found in the magnetosome membrane. In terms of biological role, plays a role in regulating magnetite crystal size; partially redundant function with MmsF. The protein is Magnetosome protein MamF of Magnetospirillum gryphiswaldense (strain DSM 6361 / JCM 21280 / NBRC 15271 / MSR-1).